Consider the following 513-residue polypeptide: Na(+)/H(+) antiporter NhaB (513 aa).

A run of 12 helical transmembrane segments spans residues 23-43 (LALI…PFVA), 52-72 (IFTL…LLAI), 97-117 (LLLM…LFIF), 120-140 (LLLS…AAAF), 144-164 (FLDA…FYGI), 202-222 (LMMH…VGEP), 238-258 (FFLR…LTCL), 303-323 (AIIG…VGLI), 348-368 (TESL…AVII), 391-411 (LFYI…VGTI), 447-467 (ATPN…APLI), and 475-495 (VWMA…CVEF).

The protein belongs to the NhaB Na(+)/H(+) (TC 2.A.34) antiporter family.

The protein resides in the cell inner membrane. It carries out the reaction 2 Na(+)(in) + 3 H(+)(out) = 2 Na(+)(out) + 3 H(+)(in). Na(+)/H(+) antiporter that extrudes sodium in exchange for external protons. The sequence is that of Na(+)/H(+) antiporter NhaB from Escherichia coli O127:H6 (strain E2348/69 / EPEC).